A 122-amino-acid polypeptide reads, in one-letter code: uncharacterized protein (122 aa).

The first 22 residues, Met-1–Ala-22, serve as a signal peptide directing secretion.

This is an uncharacterized protein from Escherichia coli (strain K12).